Consider the following 1084-residue polypeptide: MDIPIIKLLVEKDSISKKYYCPDCGELLINNFNPEKFKALQCKNGHTKCLQCWEQHLKLRKNCLQCKVPVSSIKDLSLNLYIAQKISANKVYCKNRYYETKNFTIDEENGCKEIIRVDEYEKHIKECPLTYTDCKNYDDFIRANPQIDEKLLKRCGKINKSLLDEHDEQCLYQTITCEHCNELINRIDHEIHLSEWCSDIPIKCEDCKHVFKKKYIQEHKESNCPESVIDCVYVAGGCQKKLKRYNMSKHLVTANHHSQYMSKIIEEQNQDIKELHNFIENHLSKKFIDLDTIVNIQKYLIKNKNQKISQLTEIIKRVDNSFIGLHEFDELEDYISNTIDIISNFDNYKNSNSNNNNNNKNTNENENTNENTNENENIDIVGNSDNENNINENKAENNINSFIKEQIELIKIKSQQFDINSVIEEIRKNYNVEPYQVNGDNAMITSPNKTDVDNLVFDDDEDDFDLEEPQIVGEFIFNKSQETIAIPTLIRQQQQQQQQQQQQQQQQQQQPPPTPLPPQNTTITNDIQMENINENINNNINENNNNNNKNNDDDNITAATATNNSNTTSTHTILNGTNNEASMTDINETTSTTTTAETTEATASESTEESNNTAETTTTTTTTTTTITTAAETVNSTETITLRTSEKVEEKGKDGLETTESFSILNSTENSTISSLKVLSNSMIEPEITTDKENETNIKESIETKIIESIVESSSPTKSLLKQGKEQEQKNQNGNGNENENENENENENENENENENENANANVNEKENEKENSNINTSNDTEPTNDILEDIKKNKENEDSNESEDNKNNNIKSVEDTNNNNNNNNNNNNNNNNNNNNNNNNNNNNNNNENVYDIKKDRNRENVEDSNDNNSKNENGKINDNGDVKMGSEDKVNDDDDKMAMVDRSNTIFRNQILFKDFTKLNARHGVGVSIKHNHTIGKYKFYSELFINGETENEKDYLSFYLNKCKKENESIIISFGIELLNVDPKKSIRVYWDNELLNNSSQVMYNYGYGETTVIKKSILEDPNNGFLVDNCFIVNLEVYKIIDVPHPPPAHLLQKSSPPAATTTTTTSSSSSKTTPKTKR.

The region spanning 19-103 is the LIM zinc-binding domain; it reads YYCPDCGELL…KNRYYETKNF (85 aa). TRAF-type zinc fingers lie at residues 122–190 and 191–248; these read KHIK…IDHE and IHLS…YNMS. A coiled-coil region spans residues 265 to 321; that stretch reads IEEQNQDIKELHNFIENHLSKKFIDLDTIVNIQKYLIKNKNQKISQLTEIIKRVDNS. Disordered regions lie at residues 348-392, 490-523, 537-656, and 709-897; these read YKNS…NINE, IRQQ…NTTI, NNNI…KDGL, and SIVE…NDDD. 4 stretches are compositionally biased toward low complexity: residues 349 to 375, 492 to 509, 537 to 549, and 556 to 570; these read KNSN…TNEN, QQQQ…QQQQ, NNNI…NNNK, and ITAA…TTST. A coiled-coil region spans residues 489-553; it reads LIRQQQQQQQ…NNNNNKNNDD (65 aa). The span at 571–586 shows a compositional bias: polar residues; sequence HTILNGTNNEASMTDI. Positions 587-637 are enriched in low complexity; that stretch reads NETTSTTTTAETTEATASESTEESNNTAETTTTTTTTTTTITTAAETVNST. The segment covering 644–656 has biased composition (basic and acidic residues); sequence TSEKVEEKGKDGL. A coiled-coil region spans residues 735-852; sequence NGNENENENE…NNNNNNNENV (118 aa). The span at 739–757 shows a compositional bias: acidic residues; it reads NENENENENENENENENEN. Residues 774 to 785 are compositionally biased toward polar residues; that stretch reads SNINTSNDTEPT. The span at 790–799 shows a compositional bias: basic and acidic residues; the sequence is EDIKKNKENE. Residues 809–849 show a composition bias toward low complexity; that stretch reads NNNIKSVEDTNNNNNNNNNNNNNNNNNNNNNNNNNNNNNNN. Basic and acidic residues-rich tracts occupy residues 853-864 and 875-892; these read YDIKKDRNRENV and ENGK…SEDK. One can recognise an MATH domain in the interval 909 to 1042; sequence IFRNQILFKD…DNCFIVNLEV (134 aa). Positions 1056–1084 are disordered; sequence LLQKSSPPAATTTTTTSSSSSKTTPKTKR. Residues 1059–1084 show a composition bias toward low complexity; that stretch reads KSSPPAATTTTTTSSSSSKTTPKTKR.

This sequence belongs to the TNF receptor-associated factor family.

It localises to the cytoplasm. In terms of biological role, probable adapter protein and signal transducer that links members of the tumor necrosis factor receptor family to different signaling pathways by association with the receptor cytoplasmic domain and kinases. In Dictyostelium discoideum (Social amoeba), this protein is TNF receptor-associated factor family protein DDB_G0272098.